Consider the following 190-residue polypeptide: Embryo-specific protein ATS3B (190 aa).

Positions 1–24 are cleaved as a signal peptide; sequence MASVRLFFTLISFVFIISTSVYES. The N-linked (GlcNAc...) asparagine glycan is linked to N37. The 111-residue stretch at 48 to 158 folds into the PLAT domain; sequence CAYTVIISTS…ESVWYGFNYC (111 aa).

In terms of assembly, interacts with EULS3 (via N-terminus). In terms of tissue distribution, expressed in roots, rosette leaves, stems, cauline leaves and flowers.

It is found in the secreted. Its function is as follows. May play a role during embryo development. The polypeptide is Embryo-specific protein ATS3B (Arabidopsis thaliana (Mouse-ear cress)).